Reading from the N-terminus, the 434-residue chain is Ribosomal protein uS12 methylthiotransferase RimO (434 aa).

In terms of domain architecture, MTTase N-terminal spans 6 to 122; that stretch reads SKLYLLTLGC…IIAELGGHYK (117 aa). Positions 15, 51, 85, 146, 150, and 153 each coordinate [4Fe-4S] cluster. A Radical SAM core domain is found at 132-361; the sequence is LTPPYFSYLK…MAAQEEIAYA (230 aa). The region spanning 364 to 434 is the TRAM domain; it reads QALVGSFMPV…AFDLFGSLVL (71 aa).

Belongs to the methylthiotransferase family. RimO subfamily. It depends on [4Fe-4S] cluster as a cofactor.

Its subcellular location is the cytoplasm. The catalysed reaction is L-aspartate(89)-[ribosomal protein uS12]-hydrogen + (sulfur carrier)-SH + AH2 + 2 S-adenosyl-L-methionine = 3-methylsulfanyl-L-aspartate(89)-[ribosomal protein uS12]-hydrogen + (sulfur carrier)-H + 5'-deoxyadenosine + L-methionine + A + S-adenosyl-L-homocysteine + 2 H(+). In terms of biological role, catalyzes the methylthiolation of an aspartic acid residue of ribosomal protein uS12. This Chloroherpeton thalassium (strain ATCC 35110 / GB-78) protein is Ribosomal protein uS12 methylthiotransferase RimO.